Reading from the N-terminus, the 640-residue chain is MYLNLYEIKIPYRVKRLYYFNKENDPKEFARNLSRVNNIRFNDSKDLVWLEIPDIDFKITPQQAEKYKIEKNEIIGEKEDSDLFVKTIYRYIKKKFIDNNFYYKRGNNYISINDKFPLDSNTNVNAHLTYKIKLYKINERYYISVLPKFTFLSDKPALESPIKSTYLFNIKSGKTFPYISGLNGVLKIDLGENGIKEVLFPENYYFNFTSKEAEKFGFSKEIHNIYKEKIFSGYKKIKQSLYFLEDIININNYNLTMDKKIYVNIEYEFKKGISRNIKDVFKYSFYKNDQKIKIAFFFSSKKQIYEIQRSLKMLFQNKNSIFYQTIYEMGFSKVIFLREPKTNSSAFMYNPETFEISNKDFFENLEGNIMAIIILDKFLGNIDSLIQKFPENLILQPILKEKLEKIQPYIIKSYVYKMGNFIPECQPYVIRNLKDKNKTLYIGIDLSHDNYLKKSNLAISAVNNFGDIIYLNKYKNLELNEKMNLDIVEKEYIQILNEYYERNKNYPENIIVLRDGRYLEDIEIIKNILNIENIKYSLIEVNKSVNINSCEDLKEWIIKLSDNNFIYYPKTYFNQKGVEIKIIENNTDYNNEKILEQVYSLTRVVHPTPYVNYRLPYPLQVVNKVALTELEWKLYIPYMK.

The segment at 1 to 100 (MYLNLYEIKI…YIKKKFIDNN (100 aa)) is N-terminal domain. The tract at residues 101 to 153 (FYYKRGNNYISINDKFPLDSNTNVNAHLTYKIKLYKINERYYISVLPKFTFLS) is linker L1. The PAZ domain stretch occupies residues 154 to 209 (DKPALESPIKSTYLFNIKSGKTFPYISGLNGVLKIDLGENGIKEVLFPENYYFNFT). The tract at residues 210–291 (SKEAEKFGFS…KYSFYKNDQK (82 aa)) is linker L2. Residues 292-423 (IKIAFFFSSK…YVYKMGNFIP (132 aa)) are mid domain. The tract at residues 424–640 (ECQPYVIRNL…EWKLYIPYMK (217 aa)) is PIWI domain. Catalysis depends on residues Asp445, Glu481, Asp515, and Asn623. Asp445 lines the Mn(2+) pocket. Mn(2+) contacts are provided by Asp515 and Asn623.

Belongs to the argonaute family. Long pAgo subfamily. It depends on Mn(2+) as a cofactor.

A highly versatile argonaute that uses 5'-phospho- and 5'-OH- guide RNA (gRNA) or DNA (gDNA) to cleave target RNA or ssDNA (tDNA) in all possible combinations; has no detectable activity in the absence of guide. Uses short guide sequences (18-21 nucleotides (nt) on average) to bind complementary target nucleic acids resulting in target cleavage in a site-specific manner. Using 5'-phospho-gRNA or 5'-OH-gRNA the cleavage site is 10 nt downstream of the target residue base-paired with the 5'-end of the gRNA, using 5'-phospho-gDNA the cleavage site is 11 nucleotides (nt) downstream, while with 5'-OH-gDNA the cleavage site is 9 nt downstream. The chain is Protein argonaute from Marinitoga hydrogenitolerans (strain DSM 16785 / JCM 12826 / AT1271).